The sequence spans 177 residues: tRNA (cytidine(56)-2'-O)-methyltransferase (177 aa).

S-adenosyl-L-methionine-binding positions include Leu-83 and 108-112 (GAEKV).

Belongs to the aTrm56 family. As to quaternary structure, homodimer.

Its subcellular location is the cytoplasm. It catalyses the reaction cytidine(56) in tRNA + S-adenosyl-L-methionine = 2'-O-methylcytidine(56) in tRNA + S-adenosyl-L-homocysteine + H(+). Specifically catalyzes the AdoMet-dependent 2'-O-ribose methylation of cytidine at position 56 in tRNAs. The chain is tRNA (cytidine(56)-2'-O)-methyltransferase from Nitrosopumilus maritimus (strain SCM1).